The sequence spans 351 residues: Protein RecA (351 aa).

Residue glycine 64–threonine 71 coordinates ATP. Positions aspartate 330–methionine 351 are disordered. Positions aspartate 339–methionine 351 are enriched in acidic residues.

This sequence belongs to the RecA family.

The protein resides in the cytoplasm. Can catalyze the hydrolysis of ATP in the presence of single-stranded DNA, the ATP-dependent uptake of single-stranded DNA by duplex DNA, and the ATP-dependent hybridization of homologous single-stranded DNAs. It interacts with LexA causing its activation and leading to its autocatalytic cleavage. This Rhizobium leguminosarum bv. viciae protein is Protein RecA.